The following is a 258-amino-acid chain: Chaperone protein caf1M (258 aa).

A signal peptide spans 1-20; sequence MILNRLSTLGIITFGMLSFA. A disulfide bridge connects residues cysteine 121 and cysteine 160.

It belongs to the periplasmic pilus chaperone family.

The protein resides in the periplasm. Functionally, has a stimulatory role for the envelope antigen F1 secretion. It seems to interact with the subunit polypeptide and to prevent it from digestion by a protease. The sequence is that of Chaperone protein caf1M (caf1M) from Yersinia pestis.